The following is a 390-amino-acid chain: 3,5-dihydroxybiphenyl synthase (390 aa).

Residue Cys-161 is part of the active site.

This sequence belongs to the thiolase-like superfamily. Chalcone/stilbene synthases family. As to quaternary structure, homodimer.

The catalysed reaction is benzoyl-CoA + 3 malonyl-CoA + 3 H(+) = biphenyl-3,5-diol + 4 CO2 + 4 CoA. Its function is as follows. Type III polyketide synthase involved in the biosynthesis of the phytoalexins bisphenyls and dibenzofurans. Can also use salicoyl-CoA and malonyl-CoA to produce a diketide intermediate yielding 4-hydroxycoumarin after cyclization and enolization. Can also use m-hydroxybenzoyl-CoA as substrate, producing m-hydroxybenzoyl diacetic acid lactone as a derailment product. No activity with p-hydroxybenzoyl-CoA, CoA-linked cinnamic acids or acetyl-CoA. The sequence is that of 3,5-dihydroxybiphenyl synthase (BIS1) from Sorbus aucuparia (European mountain ash).